Here is a 247-residue protein sequence, read N- to C-terminus: UPF0246 protein LCABL_22600 (247 aa).

This sequence belongs to the UPF0246 family.

The polypeptide is UPF0246 protein LCABL_22600 (Lacticaseibacillus casei (strain BL23) (Lactobacillus casei)).